Here is a 128-residue protein sequence, read N- to C-terminus: NADH dehydrogenase [ubiquinone] 1 beta subcomplex subunit 6 (128 aa).

Position 2 is an N-acetylthreonine (threonine 2). An N6-acetyllysine modification is found at lysine 24. Residues 68 to 86 form a helical membrane-spanning segment; that stretch reads SIFVFTHILVPAWIIHYYM.

This sequence belongs to the complex I NDUFB6 subunit family. Complex I is composed of 45 different subunits.

It localises to the mitochondrion inner membrane. In terms of biological role, accessory subunit of the mitochondrial membrane respiratory chain NADH dehydrogenase (Complex I), that is believed not to be involved in catalysis. Complex I functions in the transfer of electrons from NADH to the respiratory chain. The immediate electron acceptor for the enzyme is believed to be ubiquinone. The chain is NADH dehydrogenase [ubiquinone] 1 beta subcomplex subunit 6 (NDUFB6) from Pongo abelii (Sumatran orangutan).